We begin with the raw amino-acid sequence, 303 residues long: Hydroxyacylglutathione hydrolase, mitochondrial (303 aa).

Positions 97, 99, 101, 102, 153, and 177 each coordinate Zn(2+). Residues 186–188 (KFF), 216–218 (HEY), and 292–295 (RKEK) each bind substrate. His-216 is a Zn(2+) binding site.

It belongs to the metallo-beta-lactamase superfamily. Glyoxalase II family. Monomer. Zn(2+) is required as a cofactor.

It is found in the mitochondrion matrix. It localises to the cytoplasm. The enzyme catalyses an S-(2-hydroxyacyl)glutathione + H2O = a 2-hydroxy carboxylate + glutathione + H(+). It carries out the reaction (R)-S-lactoylglutathione + H2O = (R)-lactate + glutathione + H(+). Its function is as follows. Thiolesterase that catalyzes the hydrolysis of S-D-lactoyl-glutathione to form glutathione and D-lactic acid. This Danio rerio (Zebrafish) protein is Hydroxyacylglutathione hydrolase, mitochondrial (hagh).